Consider the following 1704-residue polypeptide: Type-2 histone deacetylase 2 (1704 aa).

Disordered stretches follow at residues Met-1–Arg-303, Thr-315–Lys-383, and Gln-540–Ser-634. Positions Thr-15–Ser-69 are enriched in low complexity. Polar residues predominate over residues Gln-70–Asp-81. A compositionally biased stretch (acidic residues) spans Asp-97–Ala-113. The span at Lys-134–Ile-153 shows a compositional bias: polar residues. Over residues Ser-165–Ser-176 the composition is skewed to low complexity. Residues Leu-186–Met-195 are compositionally biased toward basic and acidic residues. The segment covering Leu-196 to Ser-210 has biased composition (acidic residues). Residues Asn-222–Asn-286 are compositionally biased toward low complexity. Residues Thr-315 to Pro-325 are compositionally biased toward polar residues. Over residues Asn-326–Asn-351 the composition is skewed to low complexity. The span at Gly-354 to Met-369 shows a compositional bias: acidic residues. Positions Pro-372–Lys-382 are enriched in basic residues. Composition is skewed to low complexity over residues Gln-540 to Gln-549 and Asn-561 to Ser-580. Over residues Tyr-608–Glu-620 the composition is skewed to basic and acidic residues. Positions 1165 and 1227 each coordinate substrate. 3 residues coordinate a divalent metal cation: Asp-1256, His-1258, and Asp-1350. Positions Gln-1485 to Asn-1704 are disordered. Residues Gln-1491–Asn-1616 show a composition bias toward low complexity. The span at Leu-1649–Gln-1669 shows a compositional bias: polar residues. Low complexity predominate over residues Ser-1677–Asn-1698.

This sequence belongs to the histone deacetylase family. HD type 2 subfamily.

The protein resides in the nucleus. It localises to the cytoplasm. The catalysed reaction is N(6)-acetyl-L-lysyl-[histone] + H2O = L-lysyl-[histone] + acetate. In terms of biological role, responsible for the deacetylation of lysine residues on the N-terminal part of the core histones (H2A, H2B, H3 and H4). Histone deacetylation plays an important role in transcriptional regulation, cell cycle progression and developmental events. Histone deacetylases act via the formation of large multiprotein complexes. The chain is Type-2 histone deacetylase 2 (hdaC) from Dictyostelium discoideum (Social amoeba).